Here is a 265-residue protein sequence, read N- to C-terminus: Secreted RxLR effector protein 16 (265 aa).

A signal peptide spans 1–19; that stretch reads MRGAFYIAIALLIVRSRTA. Residues 46–61 carry the RxLR-dEER motif; sequence RYLRGGLALSATNEER. N-linked (GlcNAc...) asparagine glycosylation is found at N170, N219, and N240.

Belongs to the RxLR effector family. Post-translationally, N-glycosylated. The putative N-glycosylation site at position 240 is essential for cell death-inducing activity.

Its subcellular location is the secreted. It localises to the host nucleus. Functionally, effector that acts as an elicitor that induces cell death and promotes ROS accumulation in Nicotian benthamiana. RxLR16-triggered cell death is dependent on SGT1, HSP90 and RAR1, but independent of the somatic embryogenesis receptor-like kinase SERK3/BAK1, indicating that it acts independently of the detection of cell surface pattern recognition receptors. Enhances the expressional levels of defense-associated genes involved in the salicylic acid-, jasmonate acid-, and ethylene-mediated signal transduction, resulting in disease resistance. However, as some other Plasmopara viticola RxLR effectors including RxLR1, RxLR10, RxLR30 and RxLR25, can suppress defense responses and disease resistance induced by RxLR16, it may not trigger host cell death or immune responses during physiological infection under natural conditions. The polypeptide is Secreted RxLR effector protein 16 (Plasmopara viticola (Downy mildew of grapevine)).